We begin with the raw amino-acid sequence, 487 residues long: Cytochrome P450 2C16 (487 aa).

Cysteine 432 serves as a coordination point for heme.

It belongs to the cytochrome P450 family. Heme serves as cofactor. As to expression, expressed constitutively in liver, lung, testes, and kidney.

It is found in the endoplasmic reticulum membrane. It localises to the microsome membrane. The enzyme catalyses an organic molecule + reduced [NADPH--hemoprotein reductase] + O2 = an alcohol + oxidized [NADPH--hemoprotein reductase] + H2O + H(+). Its function is as follows. Cytochromes P450 are a group of heme-thiolate monooxygenases. In liver microsomes, this enzyme is involved in an NADPH-dependent electron transport pathway. It oxidizes a variety of structurally unrelated compounds, including steroids, fatty acids, and xenobiotics. The polypeptide is Cytochrome P450 2C16 (CYP2C16) (Oryctolagus cuniculus (Rabbit)).